We begin with the raw amino-acid sequence, 263 residues long: UPF0739 protein C1orf74 homolog (263 aa).

The protein belongs to the UPF0739 family.

This Xenopus tropicalis (Western clawed frog) protein is UPF0739 protein C1orf74 homolog.